The sequence spans 1342 residues: DNA-directed RNA polymerase subunit beta (1342 aa).

This sequence belongs to the RNA polymerase beta chain family. The RNAP catalytic core consists of 2 alpha, 1 beta, 1 beta' and 1 omega subunit. When a sigma factor is associated with the core the holoenzyme is formed, which can initiate transcription.

It carries out the reaction RNA(n) + a ribonucleoside 5'-triphosphate = RNA(n+1) + diphosphate. In terms of biological role, DNA-dependent RNA polymerase catalyzes the transcription of DNA into RNA using the four ribonucleoside triphosphates as substrates. The protein is DNA-directed RNA polymerase subunit beta of Colwellia psychrerythraea (strain 34H / ATCC BAA-681) (Vibrio psychroerythus).